The chain runs to 898 residues: Histone-lysine N-methyltransferase mes-4 (898 aa).

The disordered stretch occupies residues 1-68; it reads MLPSSGDSSK…APILTNAPKD (68 aa). Positions 36–51 are enriched in polar residues; it reads QRNATPQGAGSETSSN. 2 PHD-type zinc fingers span residues 126 to 214 and 303 to 355; these read DSKC…CNLD and IKAC…CVCG. In terms of domain architecture, SET spans 537–665; it reads EKIKLAATLC…DGDEITFSYN (129 aa). The Post-SET domain maps to 671–687; sequence NLPDCECGAENCMGTMG. The disordered stretch occupies residues 689–847; the sequence is AKREKPEVAD…SLQTIQETGK (159 aa). Residues 692-704 show a composition bias toward basic and acidic residues; that stretch reads EKPEVADSSEKAA. A compositionally biased stretch (basic residues) spans 705 to 719; sequence KKNKSSKKKSVKNQN. Low complexity-rich tracts occupy residues 737 to 751 and 761 to 773; these read ISPSKPSTSSASSTS and SQNKKNLKKNSNQ. Positions 774 to 788 are enriched in polar residues; it reads PVADTGSTLSTSTEL. The span at 802–811 shows a compositional bias: low complexity; it reads SSRSRAASSS.

This sequence belongs to the class V-like SAM-binding methyltransferase superfamily. Histone-lysine methyltransferase family. SET2 subfamily. In terms of tissue distribution, in adults, it is predominantly expressed in the germline, and weakly expressed in intestinal cells.

Its subcellular location is the nucleus. It is found in the chromosome. It catalyses the reaction L-lysyl(36)-[histone H3] + 2 S-adenosyl-L-methionine = N(6),N(6)-dimethyl-L-lysyl(36)-[histone H3] + 2 S-adenosyl-L-homocysteine + 2 H(+). Histone methyltransferase. Dimethylates 'Lys-36' of histone H3, a specific tag for epigenetic transcriptional activation. Plays a central role in early development and is responsible for all H3 'Lys-36' dimethylation until about the 40-cell stage. Indirectly involved in the global inactivation of the X chromosomes in germline cells, possibly by excluding the mes-2-mes-3-mes-6 repressive Polycomb complex from the autosomes. Not related to transcription elongation. Required for small-RNA-induced H3K27 trimethylation. May suppress sensitivity to RNAi. May regulate the expression of genes required for vulval development. This is Histone-lysine N-methyltransferase mes-4 from Caenorhabditis elegans.